Consider the following 394-residue polypeptide: MAKAKFERTKPHVNIGTIGHVDHGKTTLTAAISTVLAKKGQAIAQSYADVDKTPEERERGITINASHVEYETKTRHYAHVDCPGHADYVKNMITGAAQMDGAILVIAASDGVMAQTKEHILLARQVGVPKIVVFLNKCDFMTDPDMQDLVEMEVRELLTKYGFDGDNTPVIRGSGLKALEGDPVWEAKIDELMDAVDSWIPLPERSTDKPFLLAIEDVFTISGRGTVVTGRVERGTLKVNDEVEIVGLKDTQKTVVTGIEMFRKSLDQAEAGDNAGILLRGIKKEDVERGQVLVKPGSIKPHRTFTAKVYILKKEEGGRHTPIVSGYRPQFYFRTTDVTGAISLPAGVDLVMPGDDVEMTVELIAPVAIEDGSKFSIREGGKTVGHGSVIKTSN.

One can recognise a tr-type G domain in the interval 10 to 204 (KPHVNIGTIG…AVDSWIPLPE (195 aa)). Residues 19 to 26 (GHVDHGKT) form a G1 region. Residue 19-26 (GHVDHGKT) participates in GTP binding. Thr-26 lines the Mg(2+) pocket. The interval 60 to 64 (GITIN) is G2. The segment at 81–84 (DCPG) is G3. GTP contacts are provided by residues 81 to 85 (DCPGH) and 136 to 139 (NKCD). A G4 region spans residues 136–139 (NKCD). The segment at 174–176 (SGL) is G5.

This sequence belongs to the TRAFAC class translation factor GTPase superfamily. Classic translation factor GTPase family. EF-Tu/EF-1A subfamily. As to quaternary structure, monomer.

It localises to the cytoplasm. It carries out the reaction GTP + H2O = GDP + phosphate + H(+). In terms of biological role, GTP hydrolase that promotes the GTP-dependent binding of aminoacyl-tRNA to the A-site of ribosomes during protein biosynthesis. The polypeptide is Elongation factor Tu (Ureaplasma urealyticum serovar 10 (strain ATCC 33699 / Western)).